The chain runs to 1233 residues: Rho guanine nucleotide exchange factor 10-like protein (1233 aa).

Residues 1-10 are compositionally biased toward pro residues; sequence MASSNPPPQP. The segment at 1–93 is disordered; sequence MASSNPPPQP…GTGVPAWVSN (93 aa). Positions 26 to 46 are enriched in acidic residues; it reads EAEDDPGEAFEFDDSDDEEDT. Position 40 is a phosphoserine (Ser-40). Low complexity predominate over residues 72-89; it reads PVTDPDPAAAPPGTGVPA. Tyr-131 and Tyr-152 each carry phosphotyrosine. A disordered region spans residues 159–193; the sequence is GAPRQAEDLGWSSSEFESYSEDSGEEAKPEVEPAK. The segment covering 183 to 193 has biased composition (basic and acidic residues); that stretch reads EEAKPEVEPAK. Ser-240 carries the phosphoserine modification. A DH domain is found at 275 to 462; the sequence is VRRHILGSIV…ETLAEKLNEQ (188 aa). The span at 1089-1104 shows a compositional bias: basic and acidic residues; it reads QEEAEGPRAEEEKPDG. Disordered regions lie at residues 1089-1117 and 1140-1161; these read QEEAEGPRAEEEKPDGQAHQPMPDSHVGR and PLLSMREPAPADGAALEHSEED.

As to quaternary structure, interacts with RHOA, RHOB and RHOC.

The protein resides in the cytoplasm. In terms of biological role, acts as a guanine nucleotide exchange factor (GEF) for RHOA, RHOB and RHOC. The polypeptide is Rho guanine nucleotide exchange factor 10-like protein (ARHGEF10L) (Pongo abelii (Sumatran orangutan)).